The following is a 611-amino-acid chain: MEKQANVYVNGKLIDTSKDPENLVKSLRIQRRSGKLSPNTSISFNEESNDIHISTDGGRAVRPLVVVENGFSKLTNELLEKVNNNELTFEYLVKTGVIEFLDAEEEENARIAMYNDEITFENTHVEIDPLVILGIGAGVAPYPEHNSAPRITMAAAMGKQSLGIPMANIKWRMDTRGHLLHYPQVPLVRTKHQEILGFDKRPAGQNFVVAVMSYEGYNMEDAFVINKASLERGLGRSTFFRSYESFEKRYPGGQLDKFEVPEKGVRGYRAEEAYRNLGDDGLIDLESEVRSGDVILGKTSPPRFLEEQEITLQTKSQRRDTSVTIRHGEEGVVDLVILSETKEGNRLGKVRVRDLRVPEFGDKFASRHGQKGVIGLVVPQEDLPFTEDGVIPDLIINPHAIPSRMTIGQVLEMIGGKVGSLECRRVDGTIFSGEGEWALRHALENYGFTHSGKETMYDGKTGRKLECEIFVGVAYYQKLHHLVAGKIHARSRGPIQVLTRQPTEGRAREGGLRFGEMERDVLVAHGAALLLKERLLDESDPHEDYVCAKCGEIAIFDYKRGMKFCPVCGESEDIQDNRKIPPVKIAYAFKLLLDELKSMGIDPKLKLKDRA.

Residues Cys547, Cys550, Cys565, and Cys568 each contribute to the Zn(2+) site.

Belongs to the RNA polymerase beta chain family. In terms of assembly, part of the RNA polymerase complex. Zn(2+) is required as a cofactor.

It is found in the cytoplasm. It catalyses the reaction RNA(n) + a ribonucleoside 5'-triphosphate = RNA(n+1) + diphosphate. In terms of biological role, DNA-dependent RNA polymerase (RNAP) catalyzes the transcription of DNA into RNA using the four ribonucleoside triphosphates as substrates. The Rpo2 subunit (Rpo2N and Rpo2C in this organism) is implicated in DNA promoter recognition and in nucleotide binding. The protein is DNA-directed RNA polymerase subunit Rpo2C of Methanococcus vannielii (strain ATCC 35089 / DSM 1224 / JCM 13029 / OCM 148 / SB).